We begin with the raw amino-acid sequence, 1196 residues long: Protein BRASSINOSTEROID INSENSITIVE 1 (1196 aa).

A signal peptide spans 1–23; sequence MKTFSSFFLSVTTLFFFSFFSLS. The Cys pair 1 signature appears at 62–69; sequence CTFDGVTC. LRR repeat units lie at residues 71 to 98, 99 to 121, 122 to 146, 148 to 169, 172 to 197, 199 to 221, 222 to 244, 245 to 268, 269 to 290, 291 to 314, 316 to 338, 339 to 363, 364 to 388, 390 to 413, 415 to 439, 441 to 463, 464 to 487, 488 to 511, 513 to 535, 536 to 559, and 561 to 583; these read DDKV…LLSL, TGLE…FKCS, ASLT…SLGS, SGLK…VSGG, LNSL…VLSD, CGEL…VSRC, VNLE…LGDC, SALQ…ISTC, TELK…PLPL, KSLQ…LSGA, DTLT…FFGS, CSLL…TLLK, MRGL…LTNL, ASLL…LCQN, KNTL…LSNC, ELVS…LGSL, SKLR…LMYV, KTLE…LSNC, NLNW…IGRL, ENLA…LGDC, and SLIW…MFKQ. N-linked (GlcNAc...) asparagine glycosylation is present at Asn-112. The N-linked (GlcNAc...) asparagine glycan is linked to Asn-154. N-linked (GlcNAc...) asparagine glycosylation occurs at Asn-233. Asn-275 carries N-linked (GlcNAc...) asparagine glycosylation. N-linked (GlcNAc...) asparagine glycans are attached at residues Asn-351, Asn-387, Asn-401, and Asn-438. The N-linked (GlcNAc...) asparagine glycan is linked to Asn-510. 2 N-linked (GlcNAc...) asparagine glycosylation sites follow: Asn-545 and Asn-573. Position 597 (Tyr-597) interacts with brassinolide. Asn-636 carries an N-linked (GlcNAc...) asparagine glycan. The tract at residues 640-642 is SERK1 binding; the sequence is RVY. Tyr-642 and Ser-647 together coordinate brassinolide. The N-linked (GlcNAc...) asparagine glycan is linked to Asn-653. LRR repeat units follow at residues 653 to 677, 678 to 701, 702 to 725, and 727 to 750; these read NGSM…IGSM, PYLF…VGDL, RGLN…MSAL, and MLTE…QFET. Asn-705 contributes to the brassinolide binding site. Residues 726 to 729 form an SERK1 binding region; that stretch reads TMLT. N-linked (GlcNAc...) asparagine glycosylation occurs at Asn-737. Residues 746-750 are SERK1 binding; sequence GQFET. The Cys pair 2 signature appears at 763–770; sequence CGYPLPRC. The chain crosses the membrane as a helical span at residues 793–813; the sequence is AGSVAMGLLFSFVCIFGLILV. Residue Tyr-831 is modified to Phosphotyrosine. A Phosphoserine modification is found at Ser-838. 3 positions are modified to phosphothreonine: Thr-842, Thr-846, and Thr-851. Ser-858 carries the post-translational modification Phosphoserine. 2 positions are modified to phosphothreonine: Thr-872 and Thr-880. The Protein kinase domain occupies 883–1158; that stretch reads FHNDSLIGSG…VQVMAMFKEI (276 aa). Ser-887 and Ser-891 each carry phosphoserine. Residues 889-897 and Lys-911 contribute to the ATP site; that span reads IGSGGFGDV. Tyr-956 is modified (phosphotyrosine). ATP-binding positions include 957 to 959 and 963 to 966; these read EFM and SLED. Ser-981 carries the post-translational modification Phosphoserine. The residue at position 982 (Thr-982) is a Phosphothreonine. Asp-1009 acts as the Proton acceptor in catalysis. ATP is bound by residues 1009–1014 and Asp-1027; that span reads DMKSSN. Ser-1035 carries the post-translational modification Phosphoserine. Position 1039 is a phosphothreonine (Thr-1039). A phosphoserine mark is found at Ser-1042 and Ser-1044. 2 positions are modified to phosphothreonine: Thr-1045 and Thr-1049. Tyr-1052 is subject to Phosphotyrosine. Phosphoserine is present on Ser-1060. A Phosphotyrosine modification is found at Tyr-1072. Phosphoserine occurs at positions 1166 and 1168. Phosphothreonine is present on Thr-1169. Residues Ser-1172 and Ser-1179 each carry the phosphoserine modification. Residue Thr-1180 is modified to Phosphothreonine. A Phosphoserine modification is found at Ser-1187.

The protein belongs to the protein kinase superfamily. Ser/Thr protein kinase family. In terms of assembly, monomer or homodimer in the plasma membrane. Heterodimer with BAK1 in the endosomes. Interacts with SERK1 and TTL in a kinase-dependent manner. Bind to SERK1 in a brassinolide-dependent manner. Component of the SERK1 signaling complex, composed of KAPP, CDC48A, GRF6 or GRF7, SERK1, SERK2, SERK3/BAK1 and BRI1. Interacts with CDG1. No interactions with PSKR1 or CNGC17. Interacts with BIK1. Interacts with B'ALPHA, B'BETA, B'GAMMA and B'ETA. Interacts with BSK1 and BSK3. Interacts with BSK5, BSK6 and BSK11. Post-translationally, autophosphorylated on Tyr-831, Tyr-956 and maybe Tyr-1072. Phosphorylated on at least 12 sites, with a preference for Ser residues. Transphosphorylated on Ser-887 by SERK1 and on Ser-838, Thr-846, Ser-858 and Ser-1166 by BAK1. Phosphorylation on Ser-1166 enhances the kinase activity. Glycosylated. In terms of tissue distribution, expressed ubiquitously.

It is found in the cell membrane. It localises to the endosome membrane. It catalyses the reaction L-seryl-[protein] + ATP = O-phospho-L-seryl-[protein] + ADP + H(+). The enzyme catalyses L-threonyl-[protein] + ATP = O-phospho-L-threonyl-[protein] + ADP + H(+). The catalysed reaction is L-tyrosyl-[protein] + ATP = O-phospho-L-tyrosyl-[protein] + ADP + H(+). With respect to regulation, activated by Ser and Thr phosphorylation. In terms of biological role, receptor with a dual specificity kinase activity acting on both serine/threonine- and tyrosine-containing substrates. Regulates, in response to brassinosteroid binding, a signaling cascade involved in plant development, including expression of light- and stress-regulated genes, promotion of cell elongation, normal leaf and chloroplast senescence, and flowering. Binds brassinolide (BL), and less effectively castasterone (CS), but not 2,3,22,23-O-tetramethylbrassinolide or ecdysone. May be involved in a feedback regulation of brassinosteroid biosynthesis. Phosphorylates BRI1-associated receptor kinase 1 (BAK1), Transthyretin-Like protein (TTL) and SERK1 on 'Ser-299' and 'Thr-462' in vitro. May have a guanylyl cyclase activity. Phosphorylates BSK1, BSK2 and BSK3 in vitro. Phosphorylates BSK1, BSK3, BSK5, BSK6, BSK8 and BSK11 in vitro. This is Protein BRASSINOSTEROID INSENSITIVE 1 from Arabidopsis thaliana (Mouse-ear cress).